A 216-amino-acid chain; its full sequence is MNFLLTWIHWGLAALLYFHNAKVLQAAPAQGDGDRQQSEVIPFMTVYERSVCRPIETMVDIFQDYPDEVEYILKPPCVALMRCGGCCNDEALECVPTELYNVTMEIMKLKPYQSQHIHPMSFQQHSKCECRPKKETRIIQEKKSKREKGKGQKRKRKRGRYKPQNFHCEPCSERRKHLYKQDPLTCKCSCKFTDSRCKSKQLELNERTCRCEKPRR.

Residues 1–26 form the signal peptide; the sequence is MNFLLTWIHWGLAALLYFHNAKVLQA. Cystine bridges form between Cys52–Cys94, Cys83–Cys128, and Cys87–Cys130. Asn101 carries an N-linked (GlcNAc...) asparagine glycan. The disordered stretch occupies residues 140-161; sequence QEKKSKREKGKGQKRKRKRGRY. A compositionally biased stretch (basic residues) spans 145–161; it reads KREKGKGQKRKRKRGRY.

Belongs to the PDGF/VEGF growth factor family. Homodimer; disulfide-linked. Also found as heterodimer with PGF. Interacts to the FLT1/VEGFR1 and KDR/VEGFR2 receptors, heparan sulfate and heparin. Expressed in venom gland, heart, brain, liver, skeletal muscle and kidney.

It is found in the secreted. Its function is as follows. Growth factor active in angiogenesis, vasculogenesis and endothelial cell growth. Induces endothelial cell proliferation, promotes cell migration, inhibits apoptosis and induces permeabilization of blood vessels. The chain is Vascular endothelial growth factor A from Protobothrops flavoviridis (Habu).